The sequence spans 64 residues: U6-theraphotoxin-Cg1a (64 aa).

The signal sequence occupies residues 1 to 20 (MTRKILAVLLVFTLVACNNA). A propeptide spanning residues 21-38 (EKYSETDVEDSPMIQERR) is cleaved from the precursor. 3 disulfides stabilise this stretch: C39–C55, C46–C58, and C54–C63.

This sequence belongs to the neurotoxin 36 family. 02 subfamily. Expressed by the venom gland.

The protein localises to the secreted. In terms of biological role, probable ion channel inhibitor. In Chilobrachys guangxiensis (Chinese earth tiger tarantula), this protein is U6-theraphotoxin-Cg1a.